The primary structure comprises 480 residues: Aspartyl/glutamyl-tRNA(Asn/Gln) amidotransferase subunit B (480 aa).

Belongs to the GatB/GatE family. GatB subfamily. Heterotrimer of A, B and C subunits.

It catalyses the reaction L-glutamyl-tRNA(Gln) + L-glutamine + ATP + H2O = L-glutaminyl-tRNA(Gln) + L-glutamate + ADP + phosphate + H(+). The catalysed reaction is L-aspartyl-tRNA(Asn) + L-glutamine + ATP + H2O = L-asparaginyl-tRNA(Asn) + L-glutamate + ADP + phosphate + 2 H(+). Its function is as follows. Allows the formation of correctly charged Asn-tRNA(Asn) or Gln-tRNA(Gln) through the transamidation of misacylated Asp-tRNA(Asn) or Glu-tRNA(Gln) in organisms which lack either or both of asparaginyl-tRNA or glutaminyl-tRNA synthetases. The reaction takes place in the presence of glutamine and ATP through an activated phospho-Asp-tRNA(Asn) or phospho-Glu-tRNA(Gln). The protein is Aspartyl/glutamyl-tRNA(Asn/Gln) amidotransferase subunit B of Streptococcus pneumoniae (strain P1031).